The chain runs to 167 residues: Outer envelope pore protein 21A, chloroplastic (167 aa).

At 1-21 the chain is on the cytoplasmic side; that stretch reads METSLRYATNSRSLKIHAKEK. A beta stranded membrane pass occupies residues 22 to 31; the sequence is FPVNSKTRLQ. The Chloroplast intermembrane segment spans residues 32 to 55; that stretch reads LHGELDTGAGVPSYFCAMIRYFFH. A beta stranded transmembrane segment spans residues 56–65; the sequence is EASTNLGVGL. At 66–71 the chain is on the cytoplasmic side; it reads HYDKRE. Residues 72-81 form a beta stranded membrane-spanning segment; the sequence is KLRCLVRGKK. The Chloroplast intermembrane portion of the chain corresponds to 82-87; it reads KFPVIT. A beta stranded membrane pass occupies residues 88–97; sequence DEVVTFNIKG. Topologically, residues 98-110 are cytoplasmic; it reads RCDFDQDLVQRNA. The beta stranded transmembrane segment at 111–120 threads the bilayer; the sequence is KGAAEFDWNI. The Chloroplast intermembrane portion of the chain corresponds to 121-127; it reads WKFQKDQ. A beta stranded transmembrane segment spans residues 128 to 137; it reads DLRLRIGYEM. Topologically, residues 138-142 are cytoplasmic; the sequence is FEKVP. Residues 143–152 form a beta stranded membrane-spanning segment; the sequence is YMQIRENNWT. The Chloroplast intermembrane segment spans residues 153-158; it reads FNTNLK. A beta stranded transmembrane segment spans residues 159 to 167; sequence GKWNVRYDL.

It belongs to the plastid outer envelope porin OEP21 (TC 1.B.29) family.

Its subcellular location is the plastid. The protein localises to the etioplast membrane. It localises to the chloroplast outer membrane. Functionally, voltage-dependent rectifying anion channel that facilitates the translocation between chloroplast and cytoplasm of phosphorylated carbohydrates such as triosephosphate, 3-phosphoglycerate and inorganic phosphate (Pi) depending of ATP to triosephosphate ratio in the plastidial intermembrane space; in high triosephosphate/ATP conditions (e.g. photosynthesis), export of triosphosphate from chloroplast (outward rectifying channels), but in high ATP/triosephosphate conditions (e.g. dark phase), import of phosphosolutes (inward rectifying channels). The sequence is that of Outer envelope pore protein 21A, chloroplastic (OEP21A) from Arabidopsis thaliana (Mouse-ear cress).